The sequence spans 202 residues: GPI-anchored hemophore cfmB (202 aa).

The signal sequence occupies residues 1-18 (MHFSRTSLILFAAGLASA). Residues 19 to 108 (QLPNVPGCSL…STTASETATT (90 aa)) enclose the CFEM domain. Intrachain disulfides connect Cys26–Cys67, Cys30–Cys62, Cys40–Cys48, and Cys50–Cys83. Residue Asp45 coordinates heme. The disordered stretch occupies residues 94 to 171 (PVGAASTTAS…PSSQSTSASA (78 aa)). The span at 97–171 (AASTTASETA…PSSQSTSASA (75 aa)) shows a compositional bias: low complexity. Asn180 is lipidated: GPI-anchor amidated asparagine. A propeptide spans 181-202 (AGSEKANVAGVVAVAAAALYLL) (removed in mature form).

Belongs to the RBT5 family. Post-translationally, the GPI-anchor is attached to the protein in the endoplasmic reticulum and serves to target the protein to the cell surface. There, the glucosamine-inositol phospholipid moiety is cleaved off and the GPI-modified mannoprotein is covalently attached via its lipidless GPI glycan remnant to the 1,6-beta-glucan of the outer cell wall layer.

The protein resides in the secreted. Its subcellular location is the cell wall. It localises to the cell membrane. Its function is as follows. GPI-anchored cell wall protein involved in stabilizing the cell wall. Not implicated in virulence, heme uptake and biofilm formation. The sequence is that of GPI-anchored hemophore cfmB from Aspergillus fumigatus (strain ATCC MYA-4609 / CBS 101355 / FGSC A1100 / Af293) (Neosartorya fumigata).